The sequence spans 242 residues: Probable transcriptional regulatory protein Bcep18194_A5621 (242 aa).

Belongs to the TACO1 family.

The protein resides in the cytoplasm. The sequence is that of Probable transcriptional regulatory protein Bcep18194_A5621 from Burkholderia lata (strain ATCC 17760 / DSM 23089 / LMG 22485 / NCIMB 9086 / R18194 / 383).